The sequence spans 254 residues: Putative cysteine-rich repeat secretory protein 37 (254 aa).

Positions Met1 to Ser29 are cleaved as a signal peptide. 2 consecutive Gnk2-homologous domains span residues Tyr36–Ser138 and Tyr145–Phe251.

It belongs to the cysteine-rich repeat secretory protein family.

The protein localises to the secreted. This chain is Putative cysteine-rich repeat secretory protein 37 (CRRSP37), found in Arabidopsis thaliana (Mouse-ear cress).